A 2920-amino-acid chain; its full sequence is Cadherin-related hmr-1 (2920 aa).

The first 19 residues, 1–19 (MSWNILLILLISNLDEVLA), serve as a signal peptide directing secretion. At 20 to 2779 (KTLLKLPSNA…AVSKLGISSP (2760 aa)) the chain is on the extracellular side. 5 N-linked (GlcNAc...) asparagine glycosylation sites follow: N72, N243, N253, N339, and N508. 14 Cadherin domains span residues 322–422 (SSRS…PPSF), 425–530 (SPLP…PPQF), 531–642 (AKQE…VPTF), 643–747 (TRPL…SAVF), 749–865 (PTSQ…KPEF), 871–979 (YSDI…SPQF), 980–1093 (ERPS…APKW), 1097–1211 (PDCK…VPQF), 1212–1335 (TVDL…APSF), 1336–1436 (EEQK…APQF), 1438–1546 (QQKY…SPIF), 1548–1661 (ERLF…APFF), 1662–1772 (EKTR…APHI), and 1772–1874 (IHGA…EPYT). 4 N-linked (GlcNAc...) asparagine glycosylation sites follow: N658, N685, N715, and N826. The N-linked (GlcNAc...) asparagine glycan is linked to N1177. N1417 is a glycosylation site (N-linked (GlcNAc...) asparagine). N1646 is a glycosylation site (N-linked (GlcNAc...) asparagine). N-linked (GlcNAc...) asparagine glycans are attached at residues N1935, N2224, and N2232. The EGF-like 1 domain maps to 2246 to 2283 (APPACQHSLCHNDGVCHNTNPGFFCECRNDGLKGARCQ). Intrachain disulfides connect C2250–C2261, C2255–C2270, and C2272–C2282. A Laminin G-like domain is found at 2284-2478 (GTTRSFGGNG…AFEQNSEKGC (195 aa)). N-linked (GlcNAc...) asparagine glycans are attached at residues N2307 and N2332. 3 cysteine pairs are disulfide-bonded: C2452/C2478, C2501/C2515, and C2517/C2526. Residues 2492-2527 (SLNHCIHGDCFADVQGSGAMVAKCVCDPGWGGARCE) form the EGF-like 2 domain. A glycan (N-linked (GlcNAc...) asparagine) is linked at N2623. A helical transmembrane segment spans residues 2780–2800 (AIILILVSLALLILLVMMMVV). The Cytoplasmic segment spans residues 2801 to 2920 (YTRRSPGAFE…VTLESIESAQ (120 aa)). S2839 is subject to Phosphoserine. Positions 2858 to 2891 (IGGHPPHYPPRGMAPPKDDHELNSKIKDLETDQN) are disordered. The segment covering 2873 to 2887 (PKDDHELNSKIKDLE) has biased composition (basic and acidic residues). Residue S2909 is modified to Phosphoserine. Residue T2912 is modified to Phosphothreonine. Residues S2915 and S2918 each carry the phosphoserine modification.

In terms of assembly, monomer in solution. Isoform a is a component of a core catenin-cadherin complex consisting of hmr-1, hmp-1 and hmp-2; the complex localizes to adherens junctions. Isoform a interacts with hmp-2; the interaction is direct. Isoform a interacts (via intracellular domain) with jac-1. Phosphorylation at T-2912 increases the binding affinity for hmp-2. In terms of processing, sumoylated. Sumoylation prevents accumulation at adherens junctions and decreases the binding affinity for hmp-2. In terms of tissue distribution, expressed in epidermal cells (at protein level). Neuron-specific.

The protein localises to the cell membrane. The protein resides in the cell junction. Its subcellular location is the adherens junction. It is found in the cell projection. It localises to the dendrite. Functionally, cadherins are calcium-dependent cell adhesion proteins. They preferentially interact with themselves in a homophilic manner in connecting cells; cadherins may thus contribute to the sorting of heterogeneous cell types. Required for adherens junction assembly and connecting adherens junctions to the cytoskeleton. Isoform a is required for cell migration during body enclosure and cell shape changes during body elongation. Required for proper localization of other junctional components, such as hmp-1, hmp-2, jac-1 and pac-1. Recruitment of pac-1 is required to establish cell polarity, independent of its role in cell adhesion. Required for primodial germ cell ingression and adherence to endodermal cells during gastrulation. In terms of biological role, isoform b is involved in axonal guidance in a subset of motor neurons. The polypeptide is Cadherin-related hmr-1 (Caenorhabditis elegans).